Reading from the N-terminus, the 273-residue chain is 2,3,4,5-tetrahydropyridine-2,6-dicarboxylate N-succinyltransferase (273 aa).

Substrate contacts are provided by R106 and D143.

This sequence belongs to the transferase hexapeptide repeat family. Homotrimer.

It is found in the cytoplasm. The catalysed reaction is (S)-2,3,4,5-tetrahydrodipicolinate + succinyl-CoA + H2O = (S)-2-succinylamino-6-oxoheptanedioate + CoA. The protein operates within amino-acid biosynthesis; L-lysine biosynthesis via DAP pathway; LL-2,6-diaminopimelate from (S)-tetrahydrodipicolinate (succinylase route): step 1/3. This Wolbachia pipientis wMel protein is 2,3,4,5-tetrahydropyridine-2,6-dicarboxylate N-succinyltransferase.